The sequence spans 232 residues: UPF0235 protein At5g63440 (232 aa).

It belongs to the UPF0235 family. As to quaternary structure, interacts with CTN.

Its subcellular location is the nucleus speckle. In terms of biological role, may play a role during early embryonic development. Probably involved in pre-mRNA splicing. The chain is UPF0235 protein At5g63440 from Arabidopsis thaliana (Mouse-ear cress).